The primary structure comprises 176 residues: Sigma intracellular receptor 2 (176 aa).

Topologically, residues 1-9 are cytoplasmic; sequence MGTLGARRG. Residues 10-30 form a helical membrane-spanning segment; it reads LEWFLGFYFLSHIPITLLMDL. The EXPERA domain occupies 10-158; that stretch reads LEWFLGFYFL…PYFLIPLILL (149 aa). The Lumenal portion of the chain corresponds to 31-68; it reads QGVLPRDLYPVELRNLQQWYIEEFKDPLLQTPPAWFKS. A helical membrane pass occupies residues 69–89; that stretch reads FLFCELVFQLPFFPIAAYAFF. Cholesterol is bound by residues Val-75 and Gln-77. Over 90–99 the chain is Cytoplasmic; sequence KGGCKWIRTP. Residues 100–120 form a helical membrane-spanning segment; the sequence is AIIYSVHTMTTLIPILSTLLL. Over 121–141 the chain is Lumenal; that stretch reads DDFSKASHFRGQGPKTFQERL. Residues 142 to 162 form a helical membrane-spanning segment; it reads FLISVYIPYFLIPLILLLFMV. At 163–176 the chain is on the cytoplasmic side; that stretch reads RNPYYKSEEKRKKK. The ER retention motif motif lies at 172–176; the sequence is KRKKK.

This sequence belongs to the TMEM97/sigma-2 receptor family. Homodimer. Interacts with NPC1; the interaction impairs NPC1-mediated cholesterol transport. Interacts with PGRMC1 and LDLR; the interaction increases LDL internalization. Interacts with histatin 1/HTN1; the interaction induces HTN1-stimulating wound healing. Interacts with TSPO.

It localises to the rough endoplasmic reticulum membrane. Its subcellular location is the nucleus membrane. In terms of biological role, sigma-2 receptor which contributes to ameliorate dysfunctional cellular processes and slow degenerative progression by regulating cell functions including cholesterol biosynthesis/trafficking, membrane trafficking, autophagy, lipid membrane-bound protein trafficking, and receptor stabilization at the cell surface. Forms a ternary complex with PGRMC1 receptor and low density lipoprotein receptor/LDLR at the plasma membrane, which increases LDLR-mediated LDL cholesterol internalization. Decreases lysosomal sterol transporter NPC1 availability to the cell, probably through NPC1-binding, hence controlling lipid transport, including cholesterol and LBPA, outside of late endosome/lysosome. Binds regio- and stereoselective ligand 20(S)-hydroxycholesterol (20(S)-OHC) which enhances TMEM97-NPC1 interaction and decreases TMEM97-PGRMC1 and TMEM97-TSPO interactions, thereby linking OHC binding to cholesterol homeostasis. Also able to bind cholesterol. Binds histatin 1 (Hst 1)/HN1 salivary peptide at the ER membrane, which is critical for increasing mitochondria-ER contacts and stimulating Hst1 wound healing properties. May alter the activity of some cytochrome P450 proteins. Although shows homologies with sterol isomerases (EXPERA domain), not able to catalyze sterol isomerization. However, may act as sensors of these molecules. Acts as a quality control factor in the ER, promoting the proteolytic degradation of nonproductive and extramitochondrial precursor proteins in the ER membrane thus removing them from the ER surface. In Bos taurus (Bovine), this protein is Sigma intracellular receptor 2 (TMEM97).